A 437-amino-acid polypeptide reads, in one-letter code: Elongation factor 1-gamma (437 aa).

Ala2 carries the post-translational modification N-acetylalanine. The GST N-terminal domain maps to Ala2–Ser87. Residues Thr88–Phe216 form the GST C-terminal domain. Residues Lys147 and Lys212 each carry the N6-acetyllysine modification. Basic and acidic residues predominate over residues Phe221–Ala254. The interval Phe221 to Gln268 is disordered. Lys253 is covalently cross-linked (Glycyl lysine isopeptide (Lys-Gly) (interchain with G-Cter in SUMO1)). The EF-1-gamma C-terminal domain occupies Ala276–Lys437. Lys285 participates in a covalent cross-link: Glycyl lysine isopeptide (Lys-Gly) (interchain with G-Cter in SUMO2). At Lys401 the chain carries N6-acetyllysine. An N6-acetyllysine; alternate modification is found at Lys434. Residue Lys434 is modified to N6-malonyllysine; alternate.

In terms of assembly, EF-1 is composed of four subunits: alpha, beta, delta, and gamma.

Functionally, probably plays a role in anchoring the complex to other cellular components. The sequence is that of Elongation factor 1-gamma (Eef1g) from Rattus norvegicus (Rat).